A 525-amino-acid polypeptide reads, in one-letter code: GMP synthase [glutamine-hydrolyzing] (525 aa).

The Glutamine amidotransferase type-1 domain occupies 9 to 207 (RILILDFGSQ…VLEISGCEAL (199 aa)). Catalysis depends on Cys-86, which acts as the Nucleophile. Residues His-181 and Glu-183 contribute to the active site. The GMPS ATP-PPase domain maps to 208–400 (WTPANIVEDA…LGLPYDMVYR (193 aa)). 235-241 (SGGVDSS) contributes to the ATP binding site.

Homodimer.

It catalyses the reaction XMP + L-glutamine + ATP + H2O = GMP + L-glutamate + AMP + diphosphate + 2 H(+). It participates in purine metabolism; GMP biosynthesis; GMP from XMP (L-Gln route): step 1/1. Catalyzes the synthesis of GMP from XMP. The protein is GMP synthase [glutamine-hydrolyzing] of Ectopseudomonas mendocina (strain ymp) (Pseudomonas mendocina).